A 393-amino-acid polypeptide reads, in one-letter code: Arginine biosynthesis bifunctional protein ArgJ (393 aa).

Threonine 145, lysine 171, threonine 182, glutamate 265, asparagine 388, and serine 393 together coordinate substrate. Threonine 182 functions as the Nucleophile in the catalytic mechanism.

Belongs to the ArgJ family. As to quaternary structure, heterotetramer of two alpha and two beta chains.

It localises to the cytoplasm. It carries out the reaction N(2)-acetyl-L-ornithine + L-glutamate = N-acetyl-L-glutamate + L-ornithine. The catalysed reaction is L-glutamate + acetyl-CoA = N-acetyl-L-glutamate + CoA + H(+). It participates in amino-acid biosynthesis; L-arginine biosynthesis; L-ornithine and N-acetyl-L-glutamate from L-glutamate and N(2)-acetyl-L-ornithine (cyclic): step 1/1. It functions in the pathway amino-acid biosynthesis; L-arginine biosynthesis; N(2)-acetyl-L-ornithine from L-glutamate: step 1/4. Its function is as follows. Catalyzes two activities which are involved in the cyclic version of arginine biosynthesis: the synthesis of N-acetylglutamate from glutamate and acetyl-CoA as the acetyl donor, and of ornithine by transacetylation between N(2)-acetylornithine and glutamate. This chain is Arginine biosynthesis bifunctional protein ArgJ, found in Nitratidesulfovibrio vulgaris (strain ATCC 29579 / DSM 644 / CCUG 34227 / NCIMB 8303 / VKM B-1760 / Hildenborough) (Desulfovibrio vulgaris).